Reading from the N-terminus, the 318-residue chain is DNA-directed RNA polymerase subunit alpha (318 aa).

Residues 1–227 (MTQFEIECLD…NLFSPLKTID (227 aa)) are alpha N-terminal domain (alpha-NTD). The alpha C-terminal domain (alpha-CTD) stretch occupies residues 241 to 318 (HINQILIEEL…KEKTTKIYNK (78 aa)).

The protein belongs to the RNA polymerase alpha chain family. In terms of assembly, in plastids the minimal PEP RNA polymerase catalytic core is composed of four subunits: alpha, beta, beta', and beta''. When a (nuclear-encoded) sigma factor is associated with the core the holoenzyme is formed, which can initiate transcription.

Its subcellular location is the plastid. The protein resides in the chloroplast. It catalyses the reaction RNA(n) + a ribonucleoside 5'-triphosphate = RNA(n+1) + diphosphate. Functionally, DNA-dependent RNA polymerase catalyzes the transcription of DNA into RNA using the four ribonucleoside triphosphates as substrates. The sequence is that of DNA-directed RNA polymerase subunit alpha from Guillardia theta (Cryptophyte).